The following is a 78-amino-acid chain: Calcium/calmodulin-dependent protein kinase II inhibitor 1 (78 aa).

The interval 41-68 (NKRPPKLGQIGRSKRVVIEDDRIDDVLK) is CAMK2 inhibitory domain.

This sequence belongs to the CAMK2N family. Interacts with CAMK2B; the presence of Ca(2+)/calmodulin increases the interaction but is not essential. Interacts with CAMK2A; this interaction requires CAMK2A activation by Ca(2+).

Its subcellular location is the synapse. The protein resides in the cell projection. It localises to the dendrite. It is found in the postsynaptic density. Its function is as follows. Potent and specific inhibitor of CaM-kinase II (CAMK2). Plays a role in the maintenance of long-term retrieval-induced memory in response to contextual fear. Modulates blood pressure and vascular reactivity via regulation of CAMK2 activity in addition to regulation of left ventricular mass. Mediates the NLRP3 inflammasome in cardiomyocytes via acting as an inhibitor of the MAPK14/p38 and MAPK8/JNK pathways, thereby regulating ventricular remodeling and cardiac rhythm post-myocardial infarction. Negatively effects insulin sensitivity and promotes lipid formation in adipose tissues independent of CAMK2 signaling. This chain is Calcium/calmodulin-dependent protein kinase II inhibitor 1 (CAMK2N1), found in Homo sapiens (Human).